A 463-amino-acid chain; its full sequence is Chromosomal replication initiator protein DnaA (463 aa).

Residues 1–83 are domain I, interacts with DnaA modulators; the sequence is MSTNQIILTD…LQLFQHYNNT (83 aa). Residues 83-124 are domain II; it reads TIKSIEIITKELPGTTQTVTELPTKTFADIGSSELNSENIFS. Positions 125 to 343 are domain III, AAA+ region; that stretch reads TLDARFTFDN…GALNKVIAHS (219 aa). ATP contacts are provided by Gly-171, Gly-173, Lys-174, and Thr-175. Positions 344-463 are domain IV, binds dsDNA; the sequence is NFTLKEITLE…INLLMKILQN (120 aa).

This sequence belongs to the DnaA family. Oligomerizes as a right-handed, spiral filament on DNA at oriC.

The protein localises to the cytoplasm. Plays an essential role in the initiation and regulation of chromosomal replication. ATP-DnaA binds to the origin of replication (oriC) to initiate formation of the DNA replication initiation complex once per cell cycle. Binds the DnaA box (a 9 base pair repeat at the origin) and separates the double-stranded (ds)DNA. Forms a right-handed helical filament on oriC DNA; dsDNA binds to the exterior of the filament while single-stranded (ss)DNA is stabiized in the filament's interior. The ATP-DnaA-oriC complex binds and stabilizes one strand of the AT-rich DNA unwinding element (DUE), permitting loading of DNA polymerase. After initiation quickly degrades to an ADP-DnaA complex that is not apt for DNA replication. Binds acidic phospholipids. The chain is Chromosomal replication initiator protein DnaA from Rickettsia peacockii (strain Rustic).